The following is a 172-amino-acid chain: Disulfide bond formation protein B (172 aa).

At 1–11 the chain is on the cytoplasmic side; the sequence is MNPFRWSFRAQ. Residues 12–28 traverse the membrane as a helical segment; the sequence is FLLGFLACAGLLAYAIY. At 29–46 the chain is on the periplasmic side; the sequence is VQLHLGLEPCPLCIFQRI. Cysteines 38 and 41 form a disulfide. The helical transmembrane segment at 47-63 threads the bilayer; the sequence is AFAALAVFFLIGALHGP. Residues 64–70 are Cytoplasmic-facing; sequence RAAGARK. Residues 71–88 traverse the membrane as a helical segment; sequence VYGVLSFIAAGVGMGIGA. Over 89-145 the chain is Periplasmic; that stretch reads RHVWVQIRPKDMMSSCGPPLSFLSETMGPFEVFRTVLTGTGDCGNIDWRFLGLSMPM. Cysteine 104 and cysteine 131 are oxidised to a cystine. The chain crosses the membrane as a helical span at residues 146–164; the sequence is WSMVWFVGLALWALSAGFK. Over 165–172 the chain is Cytoplasmic; the sequence is ARRSSLHH.

Belongs to the DsbB family.

It localises to the cell inner membrane. Its function is as follows. Required for disulfide bond formation in some periplasmic proteins. Acts by oxidizing the DsbA protein. This Xanthomonas oryzae pv. oryzae (strain MAFF 311018) protein is Disulfide bond formation protein B.